Here is a 346-residue protein sequence, read N- to C-terminus: Uroporphyrinogen decarboxylase (346 aa).

Residues 23-27 (RQAGR), aspartate 72, tyrosine 149, threonine 204, and histidine 318 each bind substrate.

This sequence belongs to the uroporphyrinogen decarboxylase family. Homodimer.

Its subcellular location is the cytoplasm. It catalyses the reaction uroporphyrinogen III + 4 H(+) = coproporphyrinogen III + 4 CO2. The protein operates within porphyrin-containing compound metabolism; protoporphyrin-IX biosynthesis; coproporphyrinogen-III from 5-aminolevulinate: step 4/4. Catalyzes the decarboxylation of four acetate groups of uroporphyrinogen-III to yield coproporphyrinogen-III. This Synechococcus sp. (strain JA-2-3B'a(2-13)) (Cyanobacteria bacterium Yellowstone B-Prime) protein is Uroporphyrinogen decarboxylase.